A 179-amino-acid chain; its full sequence is Large ribosomal subunit protein uL10 (179 aa).

It belongs to the universal ribosomal protein uL10 family. In terms of assembly, part of the ribosomal stalk of the 50S ribosomal subunit. The N-terminus interacts with L11 and the large rRNA to form the base of the stalk. The C-terminus forms an elongated spine to which L12 dimers bind in a sequential fashion forming a multimeric L10(L12)X complex.

Functionally, forms part of the ribosomal stalk, playing a central role in the interaction of the ribosome with GTP-bound translation factors. This Polynucleobacter necessarius subsp. necessarius (strain STIR1) protein is Large ribosomal subunit protein uL10.